The following is a 65-amino-acid chain: Large ribosomal subunit protein bL35 (65 aa).

Belongs to the bacterial ribosomal protein bL35 family.

This chain is Large ribosomal subunit protein bL35, found in Paraburkholderia xenovorans (strain LB400).